Here is a 537-residue protein sequence, read N- to C-terminus: Mitochondria-eating protein (537 aa).

An interaction with YWHAG/14-3-3 protein gamma region spans residues 1 to 273; sequence MADNLRRLVS…PCSRSHSRSR (273 aa). Serine 85, serine 127, serine 154, and serine 157 each carry phosphoserine. Positions 115–253 form a coiled coil; sequence GTRDIQQLDA…SAEKSVLQGR (139 aa). Disordered regions lie at residues 171–221 and 249–293; these read QLKS…ANQR and VLQG…AKLS. The span at 179–217 shows a compositional bias: basic and acidic residues; the sequence is EESRHRNSDRRRSEKRGSERRRVELRGSEQRVSDLDRRS. The segment covering 253–287 has biased composition (low complexity); it reads RSARSRSPSPAPCSRSHSRSRSTSPSSAKARTPSP. A phosphoserine mark is found at serine 286 and serine 508.

It belongs to the MIEAP family. In terms of assembly, interacts (via coiled-coil domains) with BNIP3L (via BH3 domain). Interacts (via coiled-coil domains) with BNIP3 (via BH3 domain). Interacts with YWHAG/14-3-3 protein gamma; a protein that also plays a role in MALM.

Its subcellular location is the cytoplasm. The protein localises to the cytosol. The protein resides in the mitochondrion outer membrane. It is found in the mitochondrion matrix. Key regulator of mitochondrial quality that mediates the repairing or degradation of unhealthy mitochondria in response to mitochondrial damage. Mediator of mitochondrial protein catabolic process (also named MALM) by mediating the degradation of damaged proteins inside mitochondria by promoting the accumulation in the mitochondrial matrix of hydrolases that are characteristic of the lysosomal lumen. Also involved in mitochondrion degradation of damaged mitochondria by promoting the formation of vacuole-like structures (named MIV), which engulf and degrade unhealthy mitochondria by accumulating lysosomes. The physical interaction of SPATA18/MIEAP, BNIP3 and BNIP3L/NIX at the mitochondrial outer membrane regulates the opening of a pore in the mitochondrial double membrane in order to mediate the translocation of lysosomal proteins from the cytoplasm to the mitochondrial matrix. Binds cardiolipin. May form molecular condensates (non-membrane-bounded organelles) within mitochondria that compartmentalize and promote cardiolipin metabolism. This is Mitochondria-eating protein (SPATA18) from Bos taurus (Bovine).